Here is a 152-residue protein sequence, read N- to C-terminus: Large ribosomal subunit protein bL9 (152 aa).

Belongs to the bacterial ribosomal protein bL9 family.

Binds to the 23S rRNA. This Parasynechococcus marenigrum (strain WH8102) protein is Large ribosomal subunit protein bL9.